A 297-amino-acid polypeptide reads, in one-letter code: Protein LRATD1 (297 aa).

S38 carries the phosphoserine modification. Residues 138–233 form the LRAT domain; the sequence is PAPEPPAPAP…CRFGKREFKA (96 aa).

The protein belongs to the LRATD family.

It localises to the cytoplasm. May play a role in cell morphology and motility. This Bos taurus (Bovine) protein is Protein LRATD1 (LRATD1).